A 283-amino-acid chain; its full sequence is Pantothenate synthetase (283 aa).

ATP is bound at residue 30-37 (MGYFHEGH). Histidine 37 serves as the catalytic Proton donor. A (R)-pantoate-binding site is contributed by glutamine 61. Glutamine 61 lines the beta-alanine pocket. 147-150 (GEKD) provides a ligand contact to ATP. Glutamine 153 provides a ligand contact to (R)-pantoate. ATP is bound by residues valine 176 and 184-187 (MSSR).

This sequence belongs to the pantothenate synthetase family. In terms of assembly, homodimer.

The protein localises to the cytoplasm. It catalyses the reaction (R)-pantoate + beta-alanine + ATP = (R)-pantothenate + AMP + diphosphate + H(+). The protein operates within cofactor biosynthesis; (R)-pantothenate biosynthesis; (R)-pantothenate from (R)-pantoate and beta-alanine: step 1/1. In terms of biological role, catalyzes the condensation of pantoate with beta-alanine in an ATP-dependent reaction via a pantoyl-adenylate intermediate. This is Pantothenate synthetase from Syntrophobacter fumaroxidans (strain DSM 10017 / MPOB).